Consider the following 152-residue polypeptide: MKVIFLQDVKGKGKKGEIKEVPLGYAQNFLIKKNLAKEATKQAIGELKGKQKSEEKHAAELLAEAKRVKEQLEKEENRLQFTEKVGPDGRTFGSITAKKIAEELQKQFGIKIDKRHIELEHPIRAIGLIEVPVKLHKEVNAQIKLNIKNSAE.

It belongs to the bacterial ribosomal protein bL9 family.

Its function is as follows. Binds to the 23S rRNA. In Streptococcus thermophilus (strain CNRZ 1066), this protein is Large ribosomal subunit protein bL9.